Reading from the N-terminus, the 230-residue chain is Alpha-S1-casein (230 aa).

A signal peptide spans methionine 1–alanine 15. 6 positions are modified to phosphoserine: serine 33, serine 83, serine 85, serine 86, serine 87, and serine 88. The segment covering aspartate 60 to serine 83 has biased composition (basic and acidic residues). Disordered regions lie at residues aspartate 60–lysine 103 and threonine 211–tryptophan 230. Over residues glycine 84–threonine 96 the composition is skewed to low complexity.

It belongs to the alpha-casein family. In terms of tissue distribution, mammary gland specific. Secreted in milk.

It is found in the secreted. Important role in the capacity of milk to transport calcium phosphate. The sequence is that of Alpha-S1-casein (CSN1S1) from Camelus dromedarius (Dromedary).